A 445-amino-acid polypeptide reads, in one-letter code: Alpha/beta hydrolase psoB (445 aa).

The Nucleophile role is filled by Ser246.

It belongs to the AB hydrolase superfamily. FUS2 hydrolase family. As to quaternary structure, homodimer.

The protein operates within secondary metabolite biosynthesis. Alpha/beta hydrolase; part of the gene cluster that mediates the biosynthesis of pseurotin A, a competitive inhibitor of chitin synthase and an inducer of nerve-cell proliferation. The PKS-NRPS hybrid synthetase psoA is responsible for the biosynthesis of azaspirene, one of the first intermediates having the 1-oxa-7-azaspiro[4,4]-non-2-ene-4,6-dione core of pseurotin, via condensation of one acetyl-CoA, 4 malonyl-CoA, and a L-phenylalanine molecule. The dual-functional monooxygenase/methyltransferase psoF seems to be involved in the addition of the C3 methyl group onto the pseurotin scaffold. Azaspirene is then converted to synerazol through 4 steps including oxidation of C17 by the cytochrome P450 monooxygenase psoD, O-methylation of the hydroxy group of C8 by the methyltransferase psoC, and the trans-to-cis isomerization of the C13 olefin by the glutathione S-transferase psoE. The fourth step of synerazol production is performed by the dual-functional monooxygenase/methyltransferase psoF which seems to catalyze the epoxidation of the intermediate deepoxy-synerazol. Synerazol can be attacked by a water molecule nonenzymatically at two different positions to yield two diol products, pseurotin A and pseurotin D. The sequence is that of Alpha/beta hydrolase psoB from Aspergillus fumigatus (strain ATCC MYA-4609 / CBS 101355 / FGSC A1100 / Af293) (Neosartorya fumigata).